Here is a 441-residue protein sequence, read N- to C-terminus: D-aminoacyl-tRNA deacylase (441 aa).

It belongs to the DtdA deacylase family. In terms of assembly, monomer. Zn(2+) serves as cofactor.

The catalysed reaction is a D-aminoacyl-tRNA + H2O = a tRNA + a D-alpha-amino acid + H(+). It catalyses the reaction glycyl-tRNA(Ala) + H2O = tRNA(Ala) + glycine + H(+). D-aminoacyl-tRNA deacylase with broad substrate specificity. By recycling D-aminoacyl-tRNA to D-amino acids and free tRNA molecules, this enzyme counteracts the toxicity associated with the formation of D-aminoacyl-tRNA entities in vivo. The chain is D-aminoacyl-tRNA deacylase from Natronomonas pharaonis (strain ATCC 35678 / DSM 2160 / CIP 103997 / JCM 8858 / NBRC 14720 / NCIMB 2260 / Gabara) (Halobacterium pharaonis).